The following is a 631-amino-acid chain: Phosphomethylpyrimidine synthase (631 aa).

Residues N239, M268, Y297, H333, 353–355, 394–397, and E433 contribute to the substrate site; these read SRG and DGLR. H437 serves as a coordination point for Zn(2+). Y460 is a substrate binding site. Zn(2+) is bound at residue H501. [4Fe-4S] cluster is bound by residues C581, C584, and C589.

Belongs to the ThiC family. As to quaternary structure, homodimer. Requires [4Fe-4S] cluster as cofactor.

The catalysed reaction is 5-amino-1-(5-phospho-beta-D-ribosyl)imidazole + S-adenosyl-L-methionine = 4-amino-2-methyl-5-(phosphooxymethyl)pyrimidine + CO + 5'-deoxyadenosine + formate + L-methionine + 3 H(+). Its pathway is cofactor biosynthesis; thiamine diphosphate biosynthesis. In terms of biological role, catalyzes the synthesis of the hydroxymethylpyrimidine phosphate (HMP-P) moiety of thiamine from aminoimidazole ribotide (AIR) in a radical S-adenosyl-L-methionine (SAM)-dependent reaction. In Escherichia coli O81 (strain ED1a), this protein is Phosphomethylpyrimidine synthase.